Consider the following 139-residue polypeptide: Orientotoxin-2 (139 aa).

As to expression, expressed by the venom gland.

The protein localises to the secreted. The enzyme catalyses a 1,2-diacyl-sn-glycero-3-phosphocholine + H2O = a 1-acyl-sn-glycero-3-phosphocholine + a fatty acid + H(+). In terms of biological role, has a highly toxic phospholipase A2 activity. This chain is Orientotoxin-2, found in Vespa orientalis (Oriental hornet).